We begin with the raw amino-acid sequence, 276 residues long: NH(3)-dependent NAD(+) synthetase (276 aa).

ATP is bound at residue 43-50 (GISGGVDS). Mg(2+) is bound at residue aspartate 49. Arginine 146 serves as a coordination point for deamido-NAD(+). Threonine 166 contributes to the ATP binding site. Glutamate 171 serves as a coordination point for Mg(2+). Deamido-NAD(+) contacts are provided by lysine 179 and aspartate 186. ATP-binding residues include lysine 195 and threonine 217. 266–267 (HK) serves as a coordination point for deamido-NAD(+).

Belongs to the NAD synthetase family. As to quaternary structure, homodimer.

It carries out the reaction deamido-NAD(+) + NH4(+) + ATP = AMP + diphosphate + NAD(+) + H(+). It participates in cofactor biosynthesis; NAD(+) biosynthesis; NAD(+) from deamido-NAD(+) (ammonia route): step 1/1. Its function is as follows. Catalyzes the ATP-dependent amidation of deamido-NAD to form NAD. Uses ammonia as a nitrogen source. The sequence is that of NH(3)-dependent NAD(+) synthetase from Vibrio campbellii (strain ATCC BAA-1116).